An 88-amino-acid polypeptide reads, in one-letter code: Putative defensin-like protein 264 (88 aa).

The N-terminal stretch at 1-26 (MEKMVLRKVVLLAILLSLSCLWVAKA) is a signal peptide. Cystine bridges form between cysteine 47–cysteine 65, cysteine 53–cysteine 70, and cysteine 57–cysteine 72.

It belongs to the DEFL family.

It is found in the secreted. The chain is Putative defensin-like protein 264 from Arabidopsis thaliana (Mouse-ear cress).